A 101-amino-acid polypeptide reads, in one-letter code: Large ribosomal subunit protein bL21 (101 aa).

Belongs to the bacterial ribosomal protein bL21 family. In terms of assembly, part of the 50S ribosomal subunit. Contacts protein L20.

Its function is as follows. This protein binds to 23S rRNA in the presence of protein L20. The protein is Large ribosomal subunit protein bL21 of Beutenbergia cavernae (strain ATCC BAA-8 / DSM 12333 / CCUG 43141 / JCM 11478 / NBRC 16432 / NCIMB 13614 / HKI 0122).